A 94-amino-acid polypeptide reads, in one-letter code: ATP synthase F(0) complex subunit f, mitochondrial (94 aa).

A2 is subject to N-acetylalanine. S3 carries the post-translational modification Phosphoserine. At K22 the chain carries N6-acetyllysine. Residues 68 to 85 traverse the membrane as a helical segment; sequence MVLACYVLFSYSFSYKHL.

The protein belongs to the ATPase F chain family. Component of the ATP synthase complex composed at least of ATP5F1A/subunit alpha, ATP5F1B/subunit beta, ATP5MC1/subunit c (homooctomer), MT-ATP6/subunit a, MT-ATP8/subunit 8, ATP5ME/subunit e, ATP5MF/subunit f, ATP5MG/subunit g, ATP5MK/subunit k, ATP5MJ/subunit j, ATP5F1C/subunit gamma, ATP5F1D/subunit delta, ATP5F1E/subunit epsilon, ATP5PF/subunit F6, ATP5PB/subunit b, ATP5PD/subunit d, ATP5PO/subunit OSCP. ATP synthase complex consists of a soluble F(1) head domain (subunits alpha(3) and beta(3)) - the catalytic core - and a membrane F(0) domain - the membrane proton channel (subunits c, a, 8, e, f, g, k and j). These two domains are linked by a central stalk (subunits gamma, delta, and epsilon) rotating inside the F1 region and a stationary peripheral stalk (subunits F6, b, d, and OSCP).

The protein resides in the mitochondrion. The protein localises to the mitochondrion inner membrane. In terms of biological role, subunit f, of the mitochondrial membrane ATP synthase complex (F(1)F(0) ATP synthase or Complex V) that produces ATP from ADP in the presence of a proton gradient across the membrane which is generated by electron transport complexes of the respiratory chain. ATP synthase complex consist of a soluble F(1) head domain - the catalytic core - and a membrane F(1) domain - the membrane proton channel. These two domains are linked by a central stalk rotating inside the F(1) region and a stationary peripheral stalk. During catalysis, ATP synthesis in the catalytic domain of F(1) is coupled via a rotary mechanism of the central stalk subunits to proton translocation. In vivo, can only synthesize ATP although its ATP hydrolase activity can be activated artificially in vitro. Part of the complex F(0) domain. The protein is ATP synthase F(0) complex subunit f, mitochondrial of Pongo abelii (Sumatran orangutan).